Consider the following 392-residue polypeptide: MLLDSRFPTDYYLRILELVIRDASCKLVYNRRLHMLEAIPLDQKLSTDQEGESSILREVISELLAHSGESYAISAQLLAVIDIYLKQEQPSNSWFARIFRKRERARKRQTINKLLLLKSILFFERQRPVKKVESVADSILQRSKGNFSSWDDFTHDVQTQKSGRETDMPDSLRGRVEEDAASQMIVEVLLAFLDNQDMYLSVSFEILRNFLEEKVLSKRSLSPRSHEAIKKIKDLYLVSPEDFQTFIGGVITESLFQEEDQLVVGCMIFSQEGRELFDSWKGISQTYPHDMLYTQAFLAEVVLHVVQHHIHLNAKVKPTSPEQVGSLYSIRDHSPQAWARMMRVLLMRWLLDYHFDVYAHLKEEILRCPPRPPFWQMIPSESGDGTFRKEAR.

This sequence belongs to the chlamydial CPn_0675/CT_696/TC_0068 family.

This is an uncharacterized protein from Chlamydia trachomatis serovar D (strain ATCC VR-885 / DSM 19411 / UW-3/Cx).